Consider the following 654-residue polypeptide: Probable potassium transport system protein Kup (654 aa).

The next 13 membrane-spanning stretches (helical) occupy residues 17–37, 40–60, 71–91, 99–119, 137–157, 164–184, 202–222, 240–260, 281–301, 338–358, 369–389, 394–414, and 423–443; these read GILV…LYVM, IIGL…AIFW, VLIT…LYAL, WLII…IITP, INTV…QQFG, FFAP…ILQI, LLSI…CTTG, ISWI…GAYL, LVMP…AAVI, IYIP…VLHF, GLAI…FMIL, WFII…FLIA, and GYVT…WYTA.

The protein belongs to the HAK/KUP transporter (TC 2.A.72) family.

It is found in the cell inner membrane. The catalysed reaction is K(+)(in) + H(+)(in) = K(+)(out) + H(+)(out). Functionally, transport of potassium into the cell. Likely operates as a K(+):H(+) symporter. This Flavobacterium psychrophilum (strain ATCC 49511 / DSM 21280 / CIP 103535 / JIP02/86) protein is Probable potassium transport system protein Kup.